Consider the following 520-residue polypeptide: Cytochrome P450 72A68 (520 aa).

Residues 11–31 (IILITVTFGLVYAWRVLNWMW) form a helical membrane-spanning segment. C466 is a binding site for heme.

It belongs to the cytochrome P450 family. The cofactor is heme.

Its subcellular location is the membrane. The catalysed reaction is oleanolate + 3 reduced [NADPH--hemoprotein reductase] + 3 O2 = gypsogenate + 3 oxidized [NADPH--hemoprotein reductase] + 4 H2O + 4 H(+). Functionally, catalyzes the carboxylation of oleanolic acid at the C-23 position to form gypsogenic acid. Involved in the hemolytic saponin biosynthetic pathway. The chain is Cytochrome P450 72A68 from Medicago truncatula (Barrel medic).